The following is a 428-amino-acid chain: GTPase Obg (428 aa).

The 158-residue stretch at 1–158 folds into the Obg domain; sequence MFVDQVKIYV…RDVILELKVL (158 aa). Residues 117-145 are disordered; the sequence is ARGGRGGRGNSRFATPTNPAPEIAENGEP. An OBG-type G domain is found at 159-329; it reads ADVGLVGFPS…LLFEVANLLE (171 aa). Residues 165-172, 190-194, 212-215, 282-285, and 310-312 contribute to the GTP site; these read GFPSVGKS, FTTIV, DLPG, NKMD, and SAV. Mg(2+)-binding residues include Ser172 and Thr192. One can recognise an OCT domain in the interval 350 to 428; that stretch reads KLETEGVKFD…ILEYEFEFID (79 aa).

This sequence belongs to the TRAFAC class OBG-HflX-like GTPase superfamily. OBG GTPase family. As to quaternary structure, monomer. The cofactor is Mg(2+).

The protein localises to the cytoplasm. Functionally, an essential GTPase which binds GTP, GDP and possibly (p)ppGpp with moderate affinity, with high nucleotide exchange rates and a fairly low GTP hydrolysis rate. Plays a role in control of the cell cycle, stress response, ribosome biogenesis and in those bacteria that undergo differentiation, in morphogenesis control. This is GTPase Obg from Bacillus cereus (strain ATCC 10987 / NRS 248).